A 357-amino-acid polypeptide reads, in one-letter code: Holliday junction branch migration complex subunit RuvB (357 aa).

Residues 3–193 are large ATPase domain (RuvB-L); it reads WDDTTDAEAA…FGFTAHMEFY (191 aa). ATP is bound by residues Leu32, Arg33, Gly74, Lys77, Thr78, Thr79, 140-142, Arg183, Tyr193, and Arg230; that span reads EDF. Thr78 is a Mg(2+) binding site. Residues 194 to 264 form a small ATPAse domain (RuvB-S) region; sequence GPAELERVIH…IAAAALAVYE (71 aa). Residues 267-357 form a head domain (RuvB-H) region; it reads ARGLDRLDRG…GNGQPDLFGA (91 aa). The DNA site is built by Arg303, Arg322, and Arg327. The segment at 337–357 is disordered; the sequence is LGLTPPRPQSSGNGQPDLFGA.

It belongs to the RuvB family. In terms of assembly, homohexamer. Forms an RuvA(8)-RuvB(12)-Holliday junction (HJ) complex. HJ DNA is sandwiched between 2 RuvA tetramers; dsDNA enters through RuvA and exits via RuvB. An RuvB hexamer assembles on each DNA strand where it exits the tetramer. Each RuvB hexamer is contacted by two RuvA subunits (via domain III) on 2 adjacent RuvB subunits; this complex drives branch migration. In the full resolvosome a probable DNA-RuvA(4)-RuvB(12)-RuvC(2) complex forms which resolves the HJ.

It localises to the cytoplasm. The enzyme catalyses ATP + H2O = ADP + phosphate + H(+). Functionally, the RuvA-RuvB-RuvC complex processes Holliday junction (HJ) DNA during genetic recombination and DNA repair, while the RuvA-RuvB complex plays an important role in the rescue of blocked DNA replication forks via replication fork reversal (RFR). RuvA specifically binds to HJ cruciform DNA, conferring on it an open structure. The RuvB hexamer acts as an ATP-dependent pump, pulling dsDNA into and through the RuvAB complex. RuvB forms 2 homohexamers on either side of HJ DNA bound by 1 or 2 RuvA tetramers; 4 subunits per hexamer contact DNA at a time. Coordinated motions by a converter formed by DNA-disengaged RuvB subunits stimulates ATP hydrolysis and nucleotide exchange. Immobilization of the converter enables RuvB to convert the ATP-contained energy into a lever motion, pulling 2 nucleotides of DNA out of the RuvA tetramer per ATP hydrolyzed, thus driving DNA branch migration. The RuvB motors rotate together with the DNA substrate, which together with the progressing nucleotide cycle form the mechanistic basis for DNA recombination by continuous HJ branch migration. Branch migration allows RuvC to scan DNA until it finds its consensus sequence, where it cleaves and resolves cruciform DNA. In Streptomyces coelicolor (strain ATCC BAA-471 / A3(2) / M145), this protein is Holliday junction branch migration complex subunit RuvB.